Consider the following 334-residue polypeptide: Cell division protein ZipA (334 aa).

At 1–2 the chain is on the periplasmic side; the sequence is ME. Residues 3–23 traverse the membrane as a helical segment; that stretch reads LHIIFLILGGLLIVLLAGFSI. Residues 24–334 lie on the Cytoplasmic side of the membrane; sequence YSARREKSRI…DRQAYFARVS (311 aa).

The protein belongs to the ZipA family. Interacts with FtsZ via their C-terminal domains.

Its subcellular location is the cell inner membrane. Essential cell division protein that stabilizes the FtsZ protofilaments by cross-linking them and that serves as a cytoplasmic membrane anchor for the Z ring. Also required for the recruitment to the septal ring of downstream cell division proteins. The chain is Cell division protein ZipA from Haemophilus ducreyi (strain 35000HP / ATCC 700724).